A 443-amino-acid polypeptide reads, in one-letter code: ATP-dependent protease ATPase subunit HslU (443 aa).

ATP is bound by residues Ile18 and 60–65; that span reads GVGKTE. The interval 142–162 is disordered; that stretch reads LGFEASPSEESNATRQKFRKK. ATP contacts are provided by Asp256, Glu321, and Arg393.

It belongs to the ClpX chaperone family. HslU subfamily. A double ring-shaped homohexamer of HslV is capped on each side by a ring-shaped HslU homohexamer. The assembly of the HslU/HslV complex is dependent on binding of ATP.

Its subcellular location is the cytoplasm. In terms of biological role, ATPase subunit of a proteasome-like degradation complex; this subunit has chaperone activity. The binding of ATP and its subsequent hydrolysis by HslU are essential for unfolding of protein substrates subsequently hydrolyzed by HslV. HslU recognizes the N-terminal part of its protein substrates and unfolds these before they are guided to HslV for hydrolysis. The protein is ATP-dependent protease ATPase subunit HslU of Nitrosomonas europaea (strain ATCC 19718 / CIP 103999 / KCTC 2705 / NBRC 14298).